An 80-amino-acid polypeptide reads, in one-letter code: U19-lycotoxin-Ls1b (80 aa).

An N-terminal signal peptide occupies residues 1–22; the sequence is MSPKVQALIFIVGLITLLAAHA. A propeptide spanning residues 23 to 34 is cleaved from the precursor; the sequence is QEELSDNIESER. Intrachain disulfides connect Cys-36–Cys-50, Cys-43–Cys-55, Cys-49–Cys-66, and Cys-57–Cys-64.

It belongs to the neurotoxin 02 (plectoxin) family. 05 (U19-lycotoxin) subfamily. As to expression, expressed by the venom gland.

The protein localises to the secreted. This chain is U19-lycotoxin-Ls1b, found in Lycosa singoriensis (Wolf spider).